Consider the following 207-residue polypeptide: Segregation and condensation protein B (207 aa).

This sequence belongs to the ScpB family. Homodimer. Homodimerization may be required to stabilize the binding of ScpA to the Smc head domains. Component of a cohesin-like complex composed of ScpA, ScpB and the Smc homodimer, in which ScpA and ScpB bind to the head domain of Smc. The presence of the three proteins is required for the association of the complex with DNA.

The protein localises to the cytoplasm. Its function is as follows. Participates in chromosomal partition during cell division. May act via the formation of a condensin-like complex containing Smc and ScpA that pull DNA away from mid-cell into both cell halves. The protein is Segregation and condensation protein B of Mycoplasma genitalium (strain ATCC 33530 / DSM 19775 / NCTC 10195 / G37) (Mycoplasmoides genitalium).